Reading from the N-terminus, the 551-residue chain is Glucan 1,4-alpha-maltotetraohydrolase (551 aa).

The first 21 residues, 1–21, serve as a signal peptide directing secretion; the sequence is MSHILRAAVLAAVLLPFPALA. Residues aspartate 22, glutamine 23, histidine 34, aspartate 37, and glutamate 38 each contribute to the Ca(2+) site. 99–100 contributes to the substrate binding site; that stretch reads YF. Asparagine 137 is a Ca(2+) binding site. Histidine 138 serves as a coordination point for substrate. Cysteine 161 and cysteine 171 form a disulfide bridge. Ca(2+)-binding residues include aspartate 172 and aspartate 175. 177–181 contacts substrate; the sequence is FIGGE. Residue aspartate 183 coordinates Ca(2+). Residue arginine 212 participates in substrate binding. Residue aspartate 214 is the Nucleophile of the active site. Glycine 218 contacts Ca(2+). Cysteine 237 and cysteine 272 form a disulfide bridge. Glutamate 240 functions as the Proton donor in the catalytic mechanism. Residues histidine 314 and glutamine 326 each contribute to the substrate site. The CBM20 domain occupies 449 to 551; sequence GGEGGLVNVN…AAGASTSGSF (103 aa).

It belongs to the glycosyl hydrolase 13 family. In terms of assembly, monomer. The cofactor is Ca(2+).

The protein resides in the secreted. It catalyses the reaction Hydrolysis of (1-&gt;4)-alpha-D-glucosidic linkages in amylaceous polysaccharides, to remove successive maltotetraose residues from the non-reducing chain ends.. Its pathway is glycan degradation; starch degradation. In Roseateles saccharophilus (Pseudomonas saccharophila), this protein is Glucan 1,4-alpha-maltotetraohydrolase (mta).